We begin with the raw amino-acid sequence, 273 residues long: Hydroxyethylthiazole kinase (273 aa).

Residue methionine 47 coordinates substrate. Arginine 123 and threonine 169 together coordinate ATP. Substrate is bound at residue glycine 196.

The protein belongs to the Thz kinase family. It depends on Mg(2+) as a cofactor.

The catalysed reaction is 5-(2-hydroxyethyl)-4-methylthiazole + ATP = 4-methyl-5-(2-phosphooxyethyl)-thiazole + ADP + H(+). Its pathway is cofactor biosynthesis; thiamine diphosphate biosynthesis; 4-methyl-5-(2-phosphoethyl)-thiazole from 5-(2-hydroxyethyl)-4-methylthiazole: step 1/1. Its function is as follows. Catalyzes the phosphorylation of the hydroxyl group of 4-methyl-5-beta-hydroxyethylthiazole (THZ). The sequence is that of Hydroxyethylthiazole kinase from Desulfotalea psychrophila (strain LSv54 / DSM 12343).